The chain runs to 155 residues: MSSQKGNVTRSRPQKHQNTFTFKNDKFDKSVQTKKINAKLHDGVCQRCKEVLEWRVKYSKYKPLSKPKKCVKCLQKTVKDSYHIMCRPCACKLEVCAKCGKEEEIVIPFNKEPEPSENTESEGSNHRRSCKRKEDSDEDLDAESDSEGEDEDTQA.

Disordered regions lie at residues 1–22 (MSSQ…TFTF) and 108–155 (PFNK…DTQA). An N-acetylserine modification is found at serine 2. Serine 136, serine 144, and serine 146 each carry phosphoserine. Over residues 136 to 155 (SDEDLDAESDSEGEDEDTQA) the composition is skewed to acidic residues.

This is an uncharacterized protein from Rattus norvegicus (Rat).